The chain runs to 238 residues: UPF0758 protein Ajs_3450 (238 aa).

The 123-residue stretch at 116 to 238 (VFDSPQAVQH…ALSMAEQGLV (123 aa)) folds into the MPN domain. Residues H187, H189, and D200 each contribute to the Zn(2+) site. Residues 187 to 200 (HNHPSGSVQPSRAD) carry the JAMM motif motif.

Belongs to the UPF0758 family.

The sequence is that of UPF0758 protein Ajs_3450 from Acidovorax sp. (strain JS42).